The sequence spans 180 residues: FMN reductase (NADH) RutF (180 aa).

This sequence belongs to the non-flavoprotein flavin reductase family. RutF subfamily.

It catalyses the reaction FMNH2 + NAD(+) = FMN + NADH + 2 H(+). Its function is as follows. Catalyzes the reduction of FMN to FMNH2 which is used to reduce pyrimidine by RutA via the Rut pathway. In Variovorax paradoxus (strain S110), this protein is FMN reductase (NADH) RutF.